Reading from the N-terminus, the 207-residue chain is Guanylate kinase (207 aa).

Residues 4 to 184 form the Guanylate kinase-like domain; it reads GTLYIVSAPS…ALSDLKTIIR (181 aa). ATP is bound at residue 11-18; that stretch reads APSGAGKS.

The protein belongs to the guanylate kinase family.

The protein resides in the cytoplasm. The enzyme catalyses GMP + ATP = GDP + ADP. Functionally, essential for recycling GMP and indirectly, cGMP. The sequence is that of Guanylate kinase (gmk) from Salmonella typhimurium (strain LT2 / SGSC1412 / ATCC 700720).